Here is a 162-residue protein sequence, read N- to C-terminus: Putative pre-16S rRNA nuclease (162 aa).

This sequence belongs to the YqgF nuclease family.

It localises to the cytoplasm. Could be a nuclease involved in processing of the 5'-end of pre-16S rRNA. This is Putative pre-16S rRNA nuclease from Brucella melitensis biotype 1 (strain ATCC 23456 / CCUG 17765 / NCTC 10094 / 16M).